We begin with the raw amino-acid sequence, 210 residues long: uncharacterized protein (210 aa).

Residues 1–20 form the signal peptide; the sequence is MRVITLSGITLFLLASLASA. The Lumenal portion of the chain corresponds to 21-175; that stretch reads IELTFKLENQ…YSTVKSTQAR (155 aa). The 84-residue stretch at 32–115 folds into the GOLD domain; the sequence is KQCYYLDSFH…DKIVTMEITM (84 aa). Residue Asn-165 is glycosylated (N-linked (GlcNAc...) asparagine). Residues 176–196 form a helical membrane-spanning segment; sequence IFWFSLAESIMVVALSALQVF. The Cytoplasmic segment spans residues 197-210; sequence IVKTFFKRSGRRGV.

The protein belongs to the EMP24/GP25L family.

Its subcellular location is the endoplasmic reticulum membrane. This is an uncharacterized protein from Schizosaccharomyces pombe (strain 972 / ATCC 24843) (Fission yeast).